Reading from the N-terminus, the 481-residue chain is Rho GTPase-activating protein 15 (481 aa).

5 positions are modified to phosphoserine: Ser51, Ser111, Ser204, Ser207, and Ser249. Residues 87–197 (MVEKEGYLQK…WFQAIKNAID (111 aa)) enclose the PH domain. The Rho-GAP domain occupies 287–476 (SHLHTVCERE…FMLTEYDKIF (190 aa)).

It localises to the cytoplasm. The protein resides in the membrane. GTPase activator for the Rho-type GTPases by converting them to an inactive GDP-bound state. Has activity toward RAC1. Overexpression results in an increase in actin stress fibers and cell contraction. This chain is Rho GTPase-activating protein 15 (Arhgap15), found in Mus musculus (Mouse).